Consider the following 145-residue polypeptide: D-aminoacyl-tRNA deacylase (145 aa).

Residues 137–138 carry the Gly-cisPro motif, important for rejection of L-amino acids motif; sequence GP.

This sequence belongs to the DTD family. Homodimer.

It localises to the cytoplasm. The enzyme catalyses glycyl-tRNA(Ala) + H2O = tRNA(Ala) + glycine + H(+). It catalyses the reaction a D-aminoacyl-tRNA + H2O = a tRNA + a D-alpha-amino acid + H(+). Functionally, an aminoacyl-tRNA editing enzyme that deacylates mischarged D-aminoacyl-tRNAs. Also deacylates mischarged glycyl-tRNA(Ala), protecting cells against glycine mischarging by AlaRS. Acts via tRNA-based rather than protein-based catalysis; rejects L-amino acids rather than detecting D-amino acids in the active site. By recycling D-aminoacyl-tRNA to D-amino acids and free tRNA molecules, this enzyme counteracts the toxicity associated with the formation of D-aminoacyl-tRNA entities in vivo and helps enforce protein L-homochirality. In Shewanella woodyi (strain ATCC 51908 / MS32), this protein is D-aminoacyl-tRNA deacylase.